The following is a 206-amino-acid chain: Casparian strip membrane protein 1 (206 aa).

The residue at position 2 (Ala2) is an N-acetylalanine. The Cytoplasmic segment spans residues 2–43; the sequence is AKESTTIDVGEPSTVTKSSSHVVKDAKKKGFVAVASRGGAKR. The helical transmembrane segment at 44-64 threads the bilayer; sequence GLAIFDFLLRLAAIAVTIGAA. At 65–95 the chain is on the extracellular side; it reads SVMYTAEETLPFFTQFLQFQAGYDDLPAFQY. A helical transmembrane segment spans residues 96-116; it reads FVIAVAVVASYLVLSLPFSIV. Topologically, residues 117–127 are cytoplasmic; sequence SIVRPHAVAPR. A helical membrane pass occupies residues 128–148; that stretch reads LILLICDTLVVTLNTSAAAAA. Topologically, residues 149–180 are extracellular; it reads ASITYLAHNGNQSTNWLPICQQFGDFCQNVST. N-linked (GlcNAc...) asparagine glycosylation is found at Asn159 and Asn177. A helical membrane pass occupies residues 181 to 201; it reads AVVADSIAILFFIVLIIISAI. Topologically, residues 202 to 206 are cytoplasmic; sequence ALKRH.

It belongs to the Casparian strip membrane proteins (CASP) family. As to quaternary structure, homodimer and heterodimers with other CASP proteins. Interacts with CASP2, CASP3, CASP4 and CASP5.

Its subcellular location is the cell membrane. Regulates membrane-cell wall junctions and localized cell wall deposition. Required for establishment of the Casparian strip membrane domain (CSD) and the subsequent formation of Casparian strips, a cell wall modification of the root endodermis that determines an apoplastic barrier between the intraorganismal apoplasm and the extraorganismal apoplasm and prevents lateral diffusion. This is Casparian strip membrane protein 1 (CASP1) from Arabidopsis thaliana (Mouse-ear cress).